A 370-amino-acid polypeptide reads, in one-letter code: Cobalt-precorrin-5B C(1)-methyltransferase (370 aa).

This sequence belongs to the CbiD family.

It carries out the reaction Co-precorrin-5B + S-adenosyl-L-methionine = Co-precorrin-6A + S-adenosyl-L-homocysteine. It functions in the pathway cofactor biosynthesis; adenosylcobalamin biosynthesis; cob(II)yrinate a,c-diamide from sirohydrochlorin (anaerobic route): step 6/10. In terms of biological role, catalyzes the methylation of C-1 in cobalt-precorrin-5B to form cobalt-precorrin-6A. This chain is Cobalt-precorrin-5B C(1)-methyltransferase, found in Prochlorococcus marinus (strain MIT 9215).